The following is a 361-amino-acid chain: Putative pumilio homolog 22 (361 aa).

One can recognise a PUM-HD domain in the interval 5-348; that stretch reads RGYDLASQVL…NIVAIIDSET (344 aa). Pumilio repeat units lie at residues 27-63 and 64-103; these read HITYRHLLVLSSDDNGCVILKKVITIADDFLKDEFLD and LIAQHAHSLSMHDLGISLIQHVLELDFTKKTTQDDKRLHE. The Pumilio 3; degenerate repeat unit spans residues 104–131; it reads LMAEFDEVLSTSVTADVDKLHKLASKLM. The stretch at 132-167 is one Pumilio 4 repeat; it reads LDSDLFFEFVITRRGSLMIQIILGKSEEVDQVILAG. One copy of the Pumilio 5; degenerate repeat lies at 168 to 205; the sequence is VKQRFIDVTTNFYGYRIMIQTIKVFKKRGDLKVYDQIL. Residues 206 to 243 form a Pumilio 6; degenerate repeat; sequence RLIGVHALYLTKDPDMGNKTFQHAINLHHQDCTTFIAC. Pumilio repeat units lie at residues 244–284 and 285–319; these read GLQS…EIVK and CDEDTLVRLATDEYGNNILKKFLALAKEHKEDFFG.

The protein resides in the cytoplasm. Functionally, sequence-specific RNA-binding protein that regulates translation and mRNA stability by binding the 3'-UTR of target mRNAs. The polypeptide is Putative pumilio homolog 22 (APUM22) (Arabidopsis thaliana (Mouse-ear cress)).